The sequence spans 1002 residues: yemanuclein (1002 aa).

The short motif at 80–85 (KKKTKK) is the Nuclear localization signal element. Disordered regions lie at residues 193 to 358 (AIIK…KKVV), 395 to 428 (VSTDVSSSDSSDMESEHGRADRQAGQHGKDGQEN), and 642 to 725 (KLKA…AKQV). The span at 207-217 (SSSSESSSSSS) shows a compositional bias: low complexity. The span at 218–262 (GDDDENDDGNNEEDDESDSEDDSEENDESDSEDDSESESLEDEDS) shows a compositional bias: acidic residues. 2 repeat units span residues 230 to 241 (EDDESDSEDDSE) and 242 to 253 (ENDESDSEDDSE). A 2 X 12 AA tandem repeats region spans residues 230–253 (EDDESDSEDDSEENDESDSEDDSE). Composition is skewed to low complexity over residues 286–320 (TGKSKPSSSSLTSGKKPPTKPITTSSSSNSPRPST), 336–358 (QPSSQLQSLPQSQAQAQALKKVV), and 395–404 (VSTDVSSSDS). Residues 408–427 (ESEHGRADRQAGQHGKDGQE) are compositionally biased toward basic and acidic residues. Residues 653–667 (PASASPKPVGVVSAP) are compositionally biased toward low complexity. The span at 679-689 (AVEDPRSRGNS) shows a compositional bias: basic and acidic residues. A phosphoserine mark is found at Ser-685 and Ser-689. The span at 690 to 701 (DTDSATSASSNS) shows a compositional bias: low complexity. A phosphoserine mark is found at Ser-885, Ser-886, and Ser-887. Residues 901-928 (SKPQKKVQSKPKNKTQNRGRSSLGAVGQ) form a disordered region. The segment covering 903–917 (PQKKVQSKPKNKTQN) has biased composition (basic residues).

The N-terminus is blocked. Oocyte specific.

The protein localises to the nucleus. The protein resides in the nucleoplasm. It is found in the chromosome. It localises to the centromere. Its subcellular location is the kinetochore. May play a key role in egg organization. May be a transcriptional regulator having a role in chromatin remodeling in concert with Hira, a histone chaperone. Involved in chromosome segregation by affecting kinetochores function in the first meiotic division. This Drosophila melanogaster (Fruit fly) protein is yemanuclein.